The chain runs to 1383 residues: Periaxin (1383 aa).

Serine 7 carries the phosphoserine modification. The 84-residue stretch at 16–99 (LVEIIVETEA…YKVSFCLKRT (84 aa)) folds into the PDZ domain. Positions 70–84 (VFFENFKYEDALRLL) match the Nuclear export signal motif. Phosphoserine is present on residues serine 133 and serine 243. Tandem repeats lie at residues 432 to 436 (GPEVK), 440 to 444 (GPEVK), 448 to 452 (VPEIK), 456 to 460 (APEAA), 461 to 465 (IPDVQ), 466 to 470 (LPEVQ), 474 to 478 (MSDMK), 482 to 486 (IPEMA), 487 to 491 (VPDVH), 492 to 496 (LPEVK), 497 to 501 (LPKVP), 502 to 506 (EMKVP), 507 to 511 (EMKLP), 515 to 519 (EMAVP), 523 to 527 (LPDIQ), 531 to 535 (VPEMK), 536 to 540 (LPDMK), 544 to 548 (VPEMA), 549 to 553 (VPDVH), 554 to 558 (LPDIQ), 562 to 566 (VPEMK), 567 to 571 (LPDMK), 575 to 579 (VPEMA), 580 to 584 (VPDVR), 585 to 589 (IPEVQ), 593 to 597 (VSEVK), 601 to 605 (IPDMA), 606 to 610 (VPDVR), 611 to 615 (LPELQ), 619 to 623 (MSEVK), 627 to 631 (IPDMA), 632 to 636 (VPDVR), 637 to 641 (LPEVQ), 645 to 649 (VSELK), 653 to 657 (VPEMT), 658 to 662 (MPDIR), 663 to 667 (LPEVQ), 671 to 675 (VPDIK), 676 to 680 (LPEIK), 684 to 688 (VPEMA), 689 to 693 (VPDVP), 694 to 698 (LPELQ), 699 to 703 (LPKVP), 705 to 709 (VPDVH), 713 to 717 (VPEMK), and 718 to 722 (LPKVP). Positions 432–722 (GPEVKAPKGP…VPEMKLPKVP (291 aa)) are 46 X 5 AA approximate tandem repeats of [LVMGIE]-[PSM]-[EDKA]-[LIVMA]-[AQKHPRT]; that may have a tripeptide spacer of [ALKD]-[IPV]-[KPH]. Residues serine 838, serine 971, serine 1020, serine 1271, serine 1275, serine 1277, serine 1285, serine 1323, and serine 1329 each carry the phosphoserine modification. Positions 1251-1383 (KVKSPKLRLP…RIEGTQAAAI (133 aa)) are disordered. Positions 1267–1277 (SESASGEGSPS) are enriched in low complexity. Residues 1346–1355 (GSKDREEGGF) are compositionally biased toward basic and acidic residues. A Phosphoserine modification is found at serine 1361.

Belongs to the periaxin family. As to quaternary structure, homodimer (via PDZ domain). Interacts with SCN10A. Found in a complex with SCN10A. Interacts with DRP2. Identified in a dystroglycan complex that contains at least PRX, DRP2, UTRN, DMD and DAG1. Detected in a complex composed of at least EZR, AHNAK, PPL and PRX. Identified in a complex with EZR, AHNAK, BFSP1, BFSP2, ANK2, PLEC, VIM and spectrin. In terms of processing, the N-terminus is blocked. Detected in sciatic nerve and in trigeminal nerve Schwann cells. Detected in myelinating Schwann cells in sciatic nerve (at protein level).

It localises to the nucleus. Its subcellular location is the cytoplasm. It is found in the cell membrane. The protein localises to the cell junction. In terms of biological role, scaffolding protein that functions as part of a dystroglycan complex in Schwann cells, and as part of EZR and AHNAK-containing complexes in eye lens fiber cells. Required for the maintenance of the peripheral myelin sheath that is essential for normal transmission of nerve impulses and normal perception of sensory stimuli. Required for normal transport of MBP mRNA from the perinuclear to the paranodal regions. Required for normal remyelination after nerve injury. Required for normal elongation of Schwann cells and normal length of the internodes between the nodes of Ranvier. The demyelinated nodes of Ranvier permit saltatory transmission of nerve impulses; shorter internodes cause slower transmission of nerve impulses. Required for the formation of appositions between the abaxonal surface of the myelin sheath and the Schwann cell plasma membrane; the Schwann cell cytoplasm is restricted to regions between these appositions. Required for the formation of Cajal bands and of Schmidt-Lanterman incisures that correspond to short, cytoplasm-filled regions on myelinated nerves. Recruits DRP2 to the Schwann cell plasma membrane. Required for normal protein composition of the eye lens fiber cell plasma membrane and normal eye lens fiber cell morphology. This Rattus norvegicus (Rat) protein is Periaxin (Prx).